The sequence spans 257 residues: Acetyl-coenzyme A carboxylase carboxyl transferase subunit beta (257 aa).

The CoA carboxyltransferase N-terminal domain maps to 5 to 257; that stretch reads VFTKCERCKQ…DLERLLGFVG (253 aa). Zn(2+)-binding residues include Cys9, Cys12, Cys28, and Cys31. The segment at 9–31 adopts a C4-type zinc-finger fold; it reads CERCKQPVYEKDLRARFNVCPNC.

Belongs to the AccD/PCCB family. Acetyl-CoA carboxylase is a heterohexamer composed of biotin carboxyl carrier protein (AccB), biotin carboxylase (AccC) and two subunits each of ACCase subunit alpha (AccA) and ACCase subunit beta (AccD). Requires Zn(2+) as cofactor.

Its subcellular location is the cytoplasm. It carries out the reaction N(6)-carboxybiotinyl-L-lysyl-[protein] + acetyl-CoA = N(6)-biotinyl-L-lysyl-[protein] + malonyl-CoA. The protein operates within lipid metabolism; malonyl-CoA biosynthesis; malonyl-CoA from acetyl-CoA: step 1/1. In terms of biological role, component of the acetyl coenzyme A carboxylase (ACC) complex. Biotin carboxylase (BC) catalyzes the carboxylation of biotin on its carrier protein (BCCP) and then the CO(2) group is transferred by the transcarboxylase to acetyl-CoA to form malonyl-CoA. This is Acetyl-coenzyme A carboxylase carboxyl transferase subunit beta from Rubrobacter xylanophilus (strain DSM 9941 / JCM 11954 / NBRC 16129 / PRD-1).